The sequence spans 349 residues: Secondary metabolism regulator LAE1 (349 aa).

Residues Met1–Glu46 are disordered. Positions Asn25–Ala38 are enriched in polar residues.

The protein belongs to the methyltransferase superfamily. LaeA methyltransferase family. As to quaternary structure, component of the heterotrimeric velvet complex composed of LAE1, VEL1 and VEL2; VEL1 acting as a bridging protein between LAE1 and VEL2.

It localises to the nucleus. The enzyme catalyses L-methionyl-[protein] + S-adenosyl-L-methionine = S-methyl-L-methionyl-[protein] + S-adenosyl-L-homocysteine. Functionally, methyltransferase that performs automethylation. No other methyl-accepting substrate has been identified yet. Component of the velvet transcription factor complex that acts as a global regulator for secondary metabolite gene expression. Controls the expression of the gamma-pentyl-pyrone gene clusters. Required for the expression of cellulase. Regulates asexual sporulation (conidiation) by environmental stimuli such as light and/or mechanical injury. Required for oxidative stress tolerance. Also plays a role in defense and parasitism on other fungi. This chain is Secondary metabolism regulator LAE1, found in Hypocrea atroviridis (strain ATCC 20476 / IMI 206040) (Trichoderma atroviride).